Consider the following 151-residue polypeptide: MMSAMTILVLNGPNLSRLGKREPEVYGRQTLDDINRELAASFPELSFDFFQTESEGALLEKLFNCEDKGGYRGVVLNAGALTHYSIALRDAISAITIPVVEVHLSNIYAREEFRRKSVISEVCAGVISGFGANSYHLGVRALLGMTSLEPD.

Y26 (proton acceptor) is an active-site residue. Residues N77, H83, and D90 each coordinate substrate. Residue H103 is the Proton donor of the active site. Substrate contacts are provided by residues 104–105 (LS) and R114.

This sequence belongs to the type-II 3-dehydroquinase family. As to quaternary structure, homododecamer.

The catalysed reaction is 3-dehydroquinate = 3-dehydroshikimate + H2O. It functions in the pathway metabolic intermediate biosynthesis; chorismate biosynthesis; chorismate from D-erythrose 4-phosphate and phosphoenolpyruvate: step 3/7. Catalyzes a trans-dehydration via an enolate intermediate. The sequence is that of 3-dehydroquinate dehydratase from Pelodictyon phaeoclathratiforme (strain DSM 5477 / BU-1).